Reading from the N-terminus, the 283-residue chain is Pantothenate synthetase (283 aa).

30–37 (MGTLHDGH) contributes to the ATP binding site. Histidine 37 serves as the catalytic Proton donor. Glutamine 61 is a binding site for (R)-pantoate. Glutamine 61 contacts beta-alanine. 148–151 (GLKD) provides a ligand contact to ATP. Glutamine 154 is a (R)-pantoate binding site. 185 to 188 (MSSR) lines the ATP pocket.

It belongs to the pantothenate synthetase family. As to quaternary structure, homodimer.

The protein localises to the cytoplasm. The catalysed reaction is (R)-pantoate + beta-alanine + ATP = (R)-pantothenate + AMP + diphosphate + H(+). It functions in the pathway cofactor biosynthesis; (R)-pantothenate biosynthesis; (R)-pantothenate from (R)-pantoate and beta-alanine: step 1/1. Its function is as follows. Catalyzes the condensation of pantoate with beta-alanine in an ATP-dependent reaction via a pantoyl-adenylate intermediate. This chain is Pantothenate synthetase, found in Leptospira biflexa serovar Patoc (strain Patoc 1 / Ames).